The following is a 692-amino-acid chain: Ribosome-releasing factor 2, mitochondrial (692 aa).

Residues 1–29 constitute a mitochondrion transit peptide; the sequence is MLKYAWQSGPKQRNRWLWHLSNQIWKRSY. The tr-type G domain maps to 31-310; that stretch reads SKIRNIGILA…AVNAYLPAPE (280 aa). Residues 40 to 47, 104 to 108, and 158 to 161 each bind GTP; these read AHIDAGKT, DTPGH, and NKMD.

It belongs to the TRAFAC class translation factor GTPase superfamily. Classic translation factor GTPase family. EF-G/EF-2 subfamily.

It is found in the mitochondrion. In terms of biological role, mitochondrial GTPase that mediates the disassembly of ribosomes from messenger RNA at the termination of mitochondrial protein biosynthesis. Not involved in the GTP-dependent ribosomal translocation step during translation elongation. This is Ribosome-releasing factor 2, mitochondrial from Drosophila sechellia (Fruit fly).